Here is a 491-residue protein sequence, read N- to C-terminus: MGANNGKQYGSEGKGSSSVSSDVSSSTDHTPTKAQRNVATSEDSDLSMRTLSTPSPALICPPTLPGFQNGRGSSTSSSSITGETVAMVHSPPPTRLTHPLIRLASRPQKEQASIDRLPDHSMVQIFSFLPTNQLCRCARVCRRWYNLAWDPRLWRTIRLTGETINVDRALKVLTRRLCQDTPNVCLMLETVIVSGCRRLTDRGLYTIAQCCPELRRLEVSGCYNISNEAVFDVVSLCPNLEHLDVSGCSKVTCISLTREASIKLSPLHGKQISIRYLDMTDCFVLEDEGLHTIAAHCTQLTHLYLRRCVRLTDEGLRYLVIYCTSIKELSVSDCRFVSDFGLREIAKLESRLRYLSIAHCGRITDVGIRYVAKYCSKLRYLNARGCEGITDHGVEYLAKNCTKLKSLDIGKCPLVSDTGLESLALNCFNLKRLSLKSCESITGQGLQIVAANCFDLQMLNVQDCEVSVEALRFVKRHCKRCVIEHTNPAFF.

The tract at residues 1–79 (MGANNGKQYG…GRGSSTSSSS (79 aa)) is disordered. Low complexity predominate over residues 16–26 (SSSVSSDVSSS). Polar residues predominate over residues 27-55 (TDHTPTKAQRNVATSEDSDLSMRTLSTPS). In terms of domain architecture, F-box spans 111–157 (QASIDRLPDHSMVQIFSFLPTNQLCRCARVCRRWYNLAWDPRLWRTI). LRR repeat units follow at residues 185–210 (CLML…IAQC), 211–236 (CPEL…VVSL), 237–262 (CPNL…EASI), 271–296 (QISI…IAAH), 297–322 (CTQL…LVIY), 323–348 (CTSI…IAKL), 349–374 (ESRL…VAKY), 375–400 (CSKL…LAKN), 401–426 (CTKL…LALN), and 427–452 (CFNL…VAAN).

This sequence belongs to the FBXL7 family. Part of the SCF (SKP1-CUL1-F-box) E3 ubiquitin-protein ligase complex SCF(FBXL7) composed of CUL1, SKP1, RBX1 and FBXL7. Interacts with AURKA; interaction takes place during mitosis but not in interphase. Interacts with BIRC5; this interaction allows BIRC5 to be polyubiquitinated by the SCF(FBXL7) E3 ubiquitin-protein ligase complex.

Its subcellular location is the cytoplasm. The protein resides in the cytoskeleton. The protein localises to the microtubule organizing center. It is found in the centrosome. It participates in protein modification; protein ubiquitination. Functionally, substrate recognition component of a SCF (SKP1-CUL1-F-box protein) E3 ubiquitin-protein ligase complex. During mitosis, it mediates the ubiquitination and subsequent proteasomal degradation of AURKA, causing mitotic arrest. It also regulates mitochondrial function by mediating the ubiquitination and proteasomal degradation of the apoptosis inhibitor BIRC5. This is F-box/LRR-repeat protein 7 (Fbxl7) from Mus musculus (Mouse).